The chain runs to 113 residues: Iron-sulfur cluster insertion protein ErpA (113 aa).

Iron-sulfur cluster-binding residues include Cys-41, Cys-105, and Cys-107.

Belongs to the HesB/IscA family. As to quaternary structure, homodimer. The cofactor is iron-sulfur cluster.

In terms of biological role, required for insertion of 4Fe-4S clusters for at least IspG. The sequence is that of Iron-sulfur cluster insertion protein ErpA from Glaesserella parasuis serovar 5 (strain SH0165) (Haemophilus parasuis).